The sequence spans 406 residues: MSTFPAPVLGTPLSPTATRVMLLGAGELGKEVVIALQRLGVEVIAVDRYADAPGHQVAHRAHVVSMTDPQALRQVIEQERPHVVVPEIEAIATDLLVALEDEGAVRVTPTARAAHLTMNREGIHRLAAETLGLPTSPYRFVDTEQALREAIDGGIGYPCVIKPVMSSSGKGQSIIRSADDIAAAWRYAQEGGRVGAGRVIVEGFIEFDYEITLLTVRARGADGQIVTQFCEPIGHRQVDGDYVESWQPHPMSPAALQRSREIALAVTGDLGGLGIFGVELFVAGDQVWFSEVSPRPHDTGMVTLISQVQNEFELHARALLGLPVDTRLRQPGASSVIYGGVEARGVAFEGVAQALAEPGTDIRLFGKPESFAKRRMGVGLAVADDVDQARAKAARVSQAVRVRAGA.

N(1)-(5-phospho-beta-D-ribosyl)glycinamide is bound by residues 27–28 and E87; that span reads EL. ATP-binding positions include R120, K162, 167-172, 202-205, and E210; these read SSGKGQ and EGFI. One can recognise an ATP-grasp domain in the interval 125–320; sequence RLAAETLGLP…EFELHARALL (196 aa). Residues E279 and E291 each coordinate Mg(2+). N(1)-(5-phospho-beta-D-ribosyl)glycinamide-binding positions include D298, K367, and 374-375; that span reads RR.

It belongs to the PurK/PurT family. As to quaternary structure, homodimer.

It carries out the reaction N(1)-(5-phospho-beta-D-ribosyl)glycinamide + formate + ATP = N(2)-formyl-N(1)-(5-phospho-beta-D-ribosyl)glycinamide + ADP + phosphate + H(+). The protein operates within purine metabolism; IMP biosynthesis via de novo pathway; N(2)-formyl-N(1)-(5-phospho-D-ribosyl)glycinamide from N(1)-(5-phospho-D-ribosyl)glycinamide (formate route): step 1/1. In terms of biological role, involved in the de novo purine biosynthesis. Catalyzes the transfer of formate to 5-phospho-ribosyl-glycinamide (GAR), producing 5-phospho-ribosyl-N-formylglycinamide (FGAR). Formate is provided by PurU via hydrolysis of 10-formyl-tetrahydrofolate. This is Formate-dependent phosphoribosylglycinamide formyltransferase from Bordetella parapertussis (strain 12822 / ATCC BAA-587 / NCTC 13253).